We begin with the raw amino-acid sequence, 330 residues long: ADP-L-glycero-D-manno-heptose-6-epimerase (330 aa).

Residues 11 to 12 (FI), 32 to 33 (DN), K39, K54, 75 to 79 (EGACS), and N92 each bind NADP(+). The Proton acceptor role is filled by Y139. K143 contacts NADP(+). Substrate is bound at residue N168. The NADP(+) site is built by V169 and K177. Catalysis depends on K177, which acts as the Proton acceptor. Substrate is bound by residues R179, H186, 200–203 (FGEY), R213, and Y292.

Belongs to the NAD(P)-dependent epimerase/dehydratase family. HldD subfamily. As to quaternary structure, homopentamer. NADP(+) is required as a cofactor.

It carries out the reaction ADP-D-glycero-beta-D-manno-heptose = ADP-L-glycero-beta-D-manno-heptose. The protein operates within nucleotide-sugar biosynthesis; ADP-L-glycero-beta-D-manno-heptose biosynthesis; ADP-L-glycero-beta-D-manno-heptose from D-glycero-beta-D-manno-heptose 7-phosphate: step 4/4. Functionally, catalyzes the interconversion between ADP-D-glycero-beta-D-manno-heptose and ADP-L-glycero-beta-D-manno-heptose via an epimerization at carbon 6 of the heptose. The sequence is that of ADP-L-glycero-D-manno-heptose-6-epimerase from Burkholderia pseudomallei (strain K96243).